The chain runs to 47 residues: Packaging protein P22 (47 aa).

A helical transmembrane segment spans residues 22-42 (TGWLAFVGLIIVAIILWQQII).

Heterodimer of P20 and P22; further multimerizes as hexamers of heterodimers. Part of the dodecameric portal complex that is composed of the packaging efficiency factor P6, the DNA packaging ATPase P9, and the internal heterododecamer P20/P22 which spans the virion inner membrane.

It localises to the virion membrane. Functionally, together with P22, forms the internal part of the portal complex embeded in the virion internal membrane and which plays critical roles in genome packaging and genome ejection. Both proteins multimerize as a single ring-shaped heterdodecamer arranged around a central channel and interact with the P6/P9 external part of the portal. This Enterobacteria phage PRD1 (Bacteriophage PRD1) protein is Packaging protein P22 (XXII).